A 353-amino-acid polypeptide reads, in one-letter code: Nicotinate-nucleotide--dimethylbenzimidazole phosphoribosyltransferase (353 aa).

Catalysis depends on E318, which acts as the Proton acceptor.

Belongs to the CobT family.

It catalyses the reaction 5,6-dimethylbenzimidazole + nicotinate beta-D-ribonucleotide = alpha-ribazole 5'-phosphate + nicotinate + H(+). Its pathway is nucleoside biosynthesis; alpha-ribazole biosynthesis; alpha-ribazole from 5,6-dimethylbenzimidazole: step 1/2. Catalyzes the synthesis of alpha-ribazole-5'-phosphate from nicotinate mononucleotide (NAMN) and 5,6-dimethylbenzimidazole (DMB). The protein is Nicotinate-nucleotide--dimethylbenzimidazole phosphoribosyltransferase of Roseiflexus castenholzii (strain DSM 13941 / HLO8).